A 426-amino-acid chain; its full sequence is 3-phosphoshikimate 1-carboxyvinyltransferase (426 aa).

Residues Lys22, Ser23, and Arg27 each contribute to the 3-phosphoshikimate site. Phosphoenolpyruvate is bound at residue Lys22. Positions 96 and 124 each coordinate phosphoenolpyruvate. 3-phosphoshikimate is bound by residues Ser170 and Ser171. A phosphoenolpyruvate-binding site is contributed by Gln172. Ser198, Asp314, Asn337, and Lys341 together coordinate 3-phosphoshikimate. The active-site Proton acceptor is Asp314. Arg345, Arg387, and Lys412 together coordinate phosphoenolpyruvate.

This sequence belongs to the EPSP synthase family. As to quaternary structure, homotetramer.

The protein resides in the cytoplasm. The catalysed reaction is 3-phosphoshikimate + phosphoenolpyruvate = 5-O-(1-carboxyvinyl)-3-phosphoshikimate + phosphate. The protein operates within metabolic intermediate biosynthesis; chorismate biosynthesis; chorismate from D-erythrose 4-phosphate and phosphoenolpyruvate: step 6/7. Functionally, catalyzes the transfer of the enolpyruvyl moiety of phosphoenolpyruvate (PEP) to the 5-hydroxyl of shikimate-3-phosphate (S3P) to produce enolpyruvyl shikimate-3-phosphate and inorganic phosphate. In Vibrio cholerae serotype O1 (strain ATCC 39315 / El Tor Inaba N16961), this protein is 3-phosphoshikimate 1-carboxyvinyltransferase.